A 187-amino-acid polypeptide reads, in one-letter code: ECF RNA polymerase sigma factor SigK (187 aa).

Residues 30 to 96 (YDHTKSRVYG…RAVDRVRCEQ (67 aa)) form a sigma-70 factor domain-2 region. An Interaction with polymerase core subunit RpoC motif is present at residues 53-56 (ETTQ). The interval 133-182 (CLKALTDTQRQCIELAYYGGLTYVEVSRRLAANLSTIKSRMRDALRSLRN) is sigma-70 factor domain-4. The segment at residues 155-174 (YVEVSRRLAANLSTIKSRMR) is a DNA-binding region (H-T-H motif).

It belongs to the sigma-70 factor family. ECF subfamily. In terms of assembly, interacts transiently with the RNA polymerase catalytic core formed by RpoA, RpoB, RpoC and RpoZ (2 alpha, 1 beta, 1 beta' and 1 omega subunit) to form the RNA polymerase holoenzyme that can initiate transcription. Interacts (via sigma-70 factor domain 4) with anti-sigma-K factor RskA.

Sigma factors are initiation factors that promote the attachment of RNA polymerase to specific initiation sites and are then released. Extracytoplasmic function (ECF) sigma factors are held in an inactive form by an anti-sigma factor until released by regulated intramembrane proteolysis. The polypeptide is ECF RNA polymerase sigma factor SigK (sigK) (Mycobacterium tuberculosis (strain ATCC 25177 / H37Ra)).